We begin with the raw amino-acid sequence, 82 residues long: Protein costars (82 aa).

This sequence belongs to the costars family.

Its function is as follows. Modulates actin dynamics and cell motility. The chain is Protein costars (cosA) from Dictyostelium discoideum (Social amoeba).